Reading from the N-terminus, the 500-residue chain is MTSALEKNRPGAAFAFDNSYAGLPQRFFAPQAPTPVAEPWLIKLNEPLAEELGLDVEVLRRDGAAIFSGNLVPEGALPLAMAYAGHQFGGFSPVLGDGRAILLGEVVGRNGKRYDIQLKGAGQTPFSRRGDGRAALGPVLREYIISEAMFALGIPATRALAAVTTGEPVYREEVLPGAVFTRVAASHIRVGTFQFFAARGDAEGVRALADYVIDRHYPELKEAENPYAALFEAVSERQAALIARWLHIGFIHGVMNTDNMTVSGETIDFGPCAFMDIYNPSTVFSSIDHHGRYAYANQPAIGQWNLARLGETLLPLIDADQDSAVDKANAVIRAYGERFQAHWLKGMRAKIGLEGEEDGDLELVQALLALMQAQGADFTLTFRRLSDLAGDDAAEPGFATSFREPDSSGEWLARWRGRLSRDPQTAAGRAAAMRSVNPVFIPRNHRVEQAIEAAVESADFSLFEALLKVLAKPYEDQPSFAAYMEPPKPNERVLQTFCGT.

ATP contacts are provided by Gly96, Gly98, Arg99, Lys119, Asp131, Gly132, Arg182, and Arg189. Asp258 acts as the Proton acceptor in catalysis. Mg(2+) contacts are provided by Asn259 and Asp268. Asp268 contacts ATP.

Belongs to the SELO family. It depends on Mg(2+) as a cofactor. Mn(2+) serves as cofactor.

The enzyme catalyses L-seryl-[protein] + ATP = 3-O-(5'-adenylyl)-L-seryl-[protein] + diphosphate. It catalyses the reaction L-threonyl-[protein] + ATP = 3-O-(5'-adenylyl)-L-threonyl-[protein] + diphosphate. The catalysed reaction is L-tyrosyl-[protein] + ATP = O-(5'-adenylyl)-L-tyrosyl-[protein] + diphosphate. It carries out the reaction L-histidyl-[protein] + UTP = N(tele)-(5'-uridylyl)-L-histidyl-[protein] + diphosphate. The enzyme catalyses L-seryl-[protein] + UTP = O-(5'-uridylyl)-L-seryl-[protein] + diphosphate. It catalyses the reaction L-tyrosyl-[protein] + UTP = O-(5'-uridylyl)-L-tyrosyl-[protein] + diphosphate. Functionally, nucleotidyltransferase involved in the post-translational modification of proteins. It can catalyze the addition of adenosine monophosphate (AMP) or uridine monophosphate (UMP) to a protein, resulting in modifications known as AMPylation and UMPylation. The sequence is that of Protein nucleotidyltransferase YdiU from Rhizobium etli (strain ATCC 51251 / DSM 11541 / JCM 21823 / NBRC 15573 / CFN 42).